The following is a 452-amino-acid chain: Ribosomal L1 domain-containing protein 1 (452 aa).

Met-1 is subject to N-acetylmethionine. Residues Lys-119 and Lys-253 each participate in a glycyl lysine isopeptide (Lys-Gly) (interchain with G-Cter in SUMO2) cross-link. A coiled-coil region spans residues 277–350 (LRSLRKQELK…QKVTEECEEA (74 aa)). The disordered stretch occupies residues 283 to 452 (QELKKRKREN…DKKTKAAHSN (170 aa)). Positions 292–301 (NAKLKKESKM) are enriched in basic and acidic residues. Residues 309 to 319 (ATSLLTQSGLA) show a composition bias toward polar residues. Over residues 330-341 (QKKKTNKAHKKQ) the composition is skewed to basic residues. A phosphothreonine mark is found at Thr-334, Thr-344, Thr-360, Thr-399, and Thr-407. Residues 414-423 (KDVQEFRKPE) are compositionally biased toward basic and acidic residues. Positions 425–440 (SSFSTPRKSGKKASNT) are enriched in polar residues. Position 429 is a phosphothreonine (Thr-429). Lys-432 is modified (N6-acetyllysine). Ser-433 carries the post-translational modification Phosphoserine.

This sequence belongs to the universal ribosomal protein uL1 family. Highly divergent. Interacts with ING1. Interacts with KPNA7 and KPNA2.

The protein resides in the nucleus. It localises to the nucleolus. In terms of biological role, regulates cellular senescence through inhibition of PTEN translation. Acts as a pro-apoptotic regulator in response to DNA damage. The polypeptide is Ribosomal L1 domain-containing protein 1 (Mus musculus (Mouse)).